The sequence spans 574 residues: Sorting nexin-33 (574 aa).

An SH3 domain is found at 1–61; sequence MALKGRALYD…PASYVEIVRS (61 aa). The interval 68 to 119 is disordered; it reads ADYSSSPAGSPGAQVSLYNSPSVASPARSGGGSGFLSNQGSFEEDDDDDWDD. Ser77 and Ser92 each carry phosphoserine. Positions 109 to 119 are enriched in acidic residues; the sequence is FEEDDDDDWDD. Residues 230-340 enclose the PX domain; the sequence is FACSVEDPTK…HFLSCLDDKQ (111 aa). A BAR domain is found at 371–574; that stretch reads LQDVEDRVDT…EKTLRMYDNL (204 aa).

Belongs to the sorting nexin family. In terms of assembly, homodimer (via BAR domain). Interacts with ADAM15. Interacts with FASLG. Interacts (via SH3 domain) with DNM1 and DNM2. Interacts with WASL. Interacts with FCHSD1 (via the F-BAR domain). Post-translationally, phosphorylated. In terms of tissue distribution, detected in heart and pancreas.

The protein localises to the cytoplasm. The protein resides in the cytosol. It is found in the membrane. It localises to the cytoplasmic vesicle membrane. Its function is as follows. Plays a role in the reorganization of the cytoskeleton, endocytosis and cellular vesicle trafficking via its interactions with membranes, WASL, DNM1 and DNM2. Acts both during interphase and at the end of mitotic cell divisions. Required for efficient progress through mitosis and cytokinesis. Required for normal formation of the cleavage furrow at the end of mitosis. Modulates endocytosis of cell-surface proteins, such as APP and PRNP; this then modulates the secretion of APP and PRNP peptides. Promotes membrane tubulation (in vitro). May promote the formation of macropinosomes. The protein is Sorting nexin-33 (SNX33) of Homo sapiens (Human).